The chain runs to 246 residues: 5'-nucleotidase SurE (246 aa).

Asp-8, Asp-9, Ser-39, and Asn-91 together coordinate a divalent metal cation.

This sequence belongs to the SurE nucleotidase family. The cofactor is a divalent metal cation.

The protein localises to the cytoplasm. It catalyses the reaction a ribonucleoside 5'-phosphate + H2O = a ribonucleoside + phosphate. Its function is as follows. Nucleotidase that shows phosphatase activity on nucleoside 5'-monophosphates. The protein is 5'-nucleotidase SurE of Mannheimia succiniciproducens (strain KCTC 0769BP / MBEL55E).